A 486-amino-acid polypeptide reads, in one-letter code: Cardiolipin synthase A (486 aa).

2 consecutive transmembrane segments (helical) span residues Thr3–Val23 and Met38–Phe58. PLD phosphodiesterase domains follow at residues Met219–Arg246 and Glu399–Ser426. Catalysis depends on residues His224, Lys226, Asp231, His404, Lys406, and Asp411.

The protein belongs to the phospholipase D family. Cardiolipin synthase subfamily. ClsA sub-subfamily.

It is found in the cell inner membrane. It catalyses the reaction 2 a 1,2-diacyl-sn-glycero-3-phospho-(1'-sn-glycerol) = a cardiolipin + glycerol. Its function is as follows. Catalyzes the reversible phosphatidyl group transfer from one phosphatidylglycerol molecule to another to form cardiolipin (CL) (diphosphatidylglycerol) and glycerol. The chain is Cardiolipin synthase A from Yersinia pseudotuberculosis serotype IB (strain PB1/+).